The primary structure comprises 64 residues: Large ribosomal subunit protein uL30 (64 aa).

A disordered region spans residues 1–22 (MSEQVKRVRVTQVGSPIGRKPG).

Belongs to the universal ribosomal protein uL30 family. As to quaternary structure, part of the 50S ribosomal subunit.

The polypeptide is Large ribosomal subunit protein uL30 (Acidiphilium cryptum (strain JF-5)).